The chain runs to 259 residues: Acetylglutamate kinase (259 aa).

Substrate contacts are provided by residues 46 to 47 (GG), Arg68, and Asn162.

It belongs to the acetylglutamate kinase family. ArgB subfamily.

The protein resides in the cytoplasm. The enzyme catalyses N-acetyl-L-glutamate + ATP = N-acetyl-L-glutamyl 5-phosphate + ADP. It participates in amino-acid biosynthesis; L-arginine biosynthesis; N(2)-acetyl-L-ornithine from L-glutamate: step 2/4. In terms of biological role, catalyzes the ATP-dependent phosphorylation of N-acetyl-L-glutamate. The polypeptide is Acetylglutamate kinase (Roseiflexus castenholzii (strain DSM 13941 / HLO8)).